Consider the following 628-residue polypeptide: Junctophilin-4 (628 aa).

The Cytoplasmic portion of the chain corresponds to 1-606 (MSPGGKFDFD…RPAQPGAANP (606 aa)). 6 MORN repeats span residues 50–72 (LGVF…KREG), 74–95 (GVER…KGRS), 96–117 (GVWE…FQDG), 118–140 (YGTE…KRHG), 141–163 (YGVR…RTSL), and 164–186 (DSGH…EGGS). 2 disordered regions span residues 158 to 214 (PRRT…RTPA) and 231 to 276 (GGRR…LIEG). Over residues 170 to 179 (PPTPPPPLPL) the composition is skewed to pro residues. Low complexity-rich tracts occupy residues 231–241 (GGRRSSLGSKR) and 253–272 (GSTG…APPA). MORN repeat units lie at residues 317 to 339 (YGRT…RLVH) and 340 to 362 (GGRV…KVDR). The tract at residues 415–602 (DLQPMLEAPG…AATERPAQPG (188 aa)) is disordered. The span at 432 to 443 (EGSDTEPLDEDS) shows a compositional bias: acidic residues. Low complexity-rich tracts occupy residues 453-467 (PSEG…PASS) and 528-541 (GSPL…SSGS). The helical; Anchor for type IV membrane protein transmembrane segment at 607–628 (LVVGAVALLDLSLAFLFSQLLT) threads the bilayer.

This sequence belongs to the junctophilin family.

The protein localises to the cell membrane. The protein resides in the endoplasmic reticulum membrane. In terms of biological role, junctophilins contribute to the formation of junctional membrane complexes (JMCs) which link the plasma membrane with the endoplasmic or sarcoplasmic reticulum in excitable cells. Provides a structural foundation for functional cross-talk between the cell surface and intracellular calcium release channels. JPH4 is brain-specific and appears to have an active role in certain neurons involved in motor coordination and memory. The polypeptide is Junctophilin-4 (JPH4) (Homo sapiens (Human)).